A 136-amino-acid polypeptide reads, in one-letter code: MAEVKEYKQLNGLALAYMGDAVYEKFIREYLLAAGKTKPNQLHKTATKFVSAKGQAVALKAMIAEGFLTEEEDRIAKRGRNAKSYTVPKNTDPGTYSMSTSFEAVLGYLYLAGEMERLQEWMEKALEIVEKGVETN.

Residue Asp-20 is part of the active site.

This sequence belongs to the MrnC RNase family. Homodimer. Mg(2+) serves as cofactor.

It is found in the cytoplasm. In terms of biological role, involved in correct processing of both the 5' and 3' ends of 23S rRNA precursor. Processes 30S rRNA precursor transcript even in absence of ribonuclease 3 (Rnc); Rnc processes 30S rRNA into smaller rRNA precursors. This chain is Mini-ribonuclease 3, found in Listeria monocytogenes serovar 1/2a (strain ATCC BAA-679 / EGD-e).